The following is a 349-amino-acid chain: Cobalt-precorrin-5B C(1)-methyltransferase (349 aa).

This sequence belongs to the CbiD family.

It carries out the reaction Co-precorrin-5B + S-adenosyl-L-methionine = Co-precorrin-6A + S-adenosyl-L-homocysteine. Its pathway is cofactor biosynthesis; adenosylcobalamin biosynthesis; cob(II)yrinate a,c-diamide from sirohydrochlorin (anaerobic route): step 6/10. In terms of biological role, catalyzes the methylation of C-1 in cobalt-precorrin-5B to form cobalt-precorrin-6A. In Saccharolobus islandicus (strain Y.N.15.51 / Yellowstone #2) (Sulfolobus islandicus), this protein is Cobalt-precorrin-5B C(1)-methyltransferase.